We begin with the raw amino-acid sequence, 462 residues long: MAKSLQDVLDNAGNAVDFLRNQQTGPNVYPGVPAEYSNWRNEQRAWAKTAVLFNQSYHMVELMVEGPDAFAFLNYLGINSFKNFAPGKAKQWVPVTAEGYVIGDVILFYLAENQFNLVGRAPAIEWAEFHAATGKWNVTLTRDERTALRTDGVRRHYRFQLQGPNAMAILTDAMGQTPPDLKFFNMADIQIAGKTVGALRHGMAGQPGYELYGPWADYEAVHSALVAAGKNHGLALVGGRAYSSNTLESGWVPSPFPGYLFGEGSADFRKWAGENSYGAKCSIGGSYVPESLEGYGLTPWDIGYGIIVKFDHDFIGKEALEKMANEPHLEKVTLALDDEDMLRVMSSYFSDSGRAKYFEFPSAVYSMHPYDSVLVDGKHVGVSTWVGYSSNEGKMLTLAMIDPKYAKPGTEVSLLWGEPNGGTSKPTVEPHEQTEIKAVVAPVPYSAVARTGYADSWRTKKA.

It belongs to the GcvT family.

The enzyme catalyses syringate + (6S)-5,6,7,8-tetrahydrofolate = 3-O-methylgallate + (6S)-5-methyl-5,6,7,8-tetrahydrofolate. Its pathway is secondary metabolite metabolism; lignin degradation. In terms of biological role, involved in the catabolism of syringate. Catalyzes the conversion of syringate to 3-O-methylgallate (3MGA) in the presence of tetrahydrofolate. Has weak activity with vanillate and 3-O-methylgallate. In Sphingobium sp. (strain NBRC 103272 / SYK-6), this protein is Syringate O-demethylase.